We begin with the raw amino-acid sequence, 185 residues long: Adenine phosphoribosyltransferase (185 aa).

It belongs to the purine/pyrimidine phosphoribosyltransferase family. As to quaternary structure, homodimer.

Its subcellular location is the cytoplasm. The catalysed reaction is AMP + diphosphate = 5-phospho-alpha-D-ribose 1-diphosphate + adenine. Its pathway is purine metabolism; AMP biosynthesis via salvage pathway; AMP from adenine: step 1/1. Functionally, catalyzes a salvage reaction resulting in the formation of AMP, that is energically less costly than de novo synthesis. This chain is Adenine phosphoribosyltransferase, found in Rubrobacter xylanophilus (strain DSM 9941 / JCM 11954 / NBRC 16129 / PRD-1).